Reading from the N-terminus, the 334-residue chain is MKNKEVRILSTGKYLPPISISNHDLSKIIDTNDNWIKTRTGIEKRRITKGENTSDLGTKAALDALRKGGISPEELDLIIVATITPDYFTPSTACIIQRNIKAYNAFAFDISAACSGFTYGISIASQFIRNGVAKKVLVIGVETLSKLVDWKDRNTCILFGDGSGAAILTESNEKGIMNVYLGSDGRGADLLKCKSSSLTVNSDELKELLNSKEEDLENKFIEMDGKEIFKFAVKVMIKGIEKVLKDSNLELKDINYIIPHQANLRIIEHVAKKLGIDENKFYININHYGNTSAASIPIALAEVDEKGLLKKGDNVILVGFGAGLTWAASLIKWI.

Catalysis depends on residues C114 and H260. The tract at residues 261–265 is ACP-binding; sequence QANLR. N290 is a catalytic residue.

The protein belongs to the thiolase-like superfamily. FabH family. In terms of assembly, homodimer.

It localises to the cytoplasm. It catalyses the reaction malonyl-[ACP] + acetyl-CoA + H(+) = 3-oxobutanoyl-[ACP] + CO2 + CoA. Its pathway is lipid metabolism; fatty acid biosynthesis. Its function is as follows. Catalyzes the condensation reaction of fatty acid synthesis by the addition to an acyl acceptor of two carbons from malonyl-ACP. Catalyzes the first condensation reaction which initiates fatty acid synthesis and may therefore play a role in governing the total rate of fatty acid production. Possesses both acetoacetyl-ACP synthase and acetyl transacylase activities. Its substrate specificity determines the biosynthesis of branched-chain and/or straight-chain of fatty acids. The protein is Beta-ketoacyl-[acyl-carrier-protein] synthase III of Clostridium tetani (strain Massachusetts / E88).